The sequence spans 468 residues: Cysteine--tRNA ligase (468 aa).

Cys27 contributes to the Zn(2+) binding site. The 'HIGH' region motif lies at 29–39 (PTVYDDAHLGH). The Zn(2+) site is built by Cys204, His234, and Glu238. Residues 266 to 270 (KMSKS) carry the 'KMSKS' region motif. Lys269 provides a ligand contact to ATP.

This sequence belongs to the class-I aminoacyl-tRNA synthetase family. In terms of assembly, monomer. Zn(2+) is required as a cofactor.

The protein localises to the cytoplasm. It catalyses the reaction tRNA(Cys) + L-cysteine + ATP = L-cysteinyl-tRNA(Cys) + AMP + diphosphate. The sequence is that of Cysteine--tRNA ligase from Campylobacter hominis (strain ATCC BAA-381 / DSM 21671 / CCUG 45161 / LMG 19568 / NCTC 13146 / CH001A).